We begin with the raw amino-acid sequence, 417 residues long: GTP-binding protein YPT11 (417 aa).

Residues 1 to 34 (MSQRKRYSLNVVTSPSIPSPTPSAPIRTNESNWE) are disordered. Residues 97 to 104 (GDANVGKT), 228 to 232 (DTAGQ), and 292 to 295 (NKID) contribute to the GTP site. 2 S-geranylgeranyl cysteine lipidation sites follow: Cys415 and Cys416.

Belongs to the small GTPase superfamily. Rab family. As to quaternary structure, interacts with MYO2 (via C-terminal tail domain). Interacts with YIF1, YIP3, YIP4 and YIP5.

The protein localises to the endoplasmic reticulum membrane. Its subcellular location is the bud tip. The protein resides in the bud neck. Involved in the positive control of both endoplasmic reticulum (ER) and mitochondrion inheritance during cell divison. Required for the MYO2-dependent retention of newly inherited mitochondria at the bud tip in developing daughter cells. The sequence is that of GTP-binding protein YPT11 (YPT11) from Saccharomyces cerevisiae (strain RM11-1a) (Baker's yeast).